The chain runs to 142 residues: Hemoglobin subunit alpha-A (142 aa).

Residues 2–142 (VLSPTDKSIV…VSTVLTSKYR (141 aa)) enclose the Globin domain. His59 contributes to the O2 binding site. His88 is a binding site for heme b.

This sequence belongs to the globin family. Heterotetramer of two alpha chains and two beta chains. As to expression, red blood cells.

Involved in oxygen transport from the lung to the various peripheral tissues. The protein is Hemoglobin subunit alpha-A (HBAA) of Otolemur crassicaudatus (Brown greater galago).